Here is a 336-residue protein sequence, read N- to C-terminus: SCP domain-containing protein 1 (336 aa).

An N-terminal signal peptide occupies residues 1–18 (MEFKLLLVLCFNIGLICS). An N-linked (GlcNAc...) asparagine glycan is attached at N47. The span at 73 to 85 (QGGNTAPSSSLPG) shows a compositional bias: polar residues. Residues 73 to 94 (QGGNTAPSSSLPGVSSMPMPSA) form a disordered region. The region spanning 175-292 (LEEHNKFRSD…YCGDMSFIAC (118 aa)) is the SCP domain. N213 and N257 each carry an N-linked (GlcNAc...) asparagine glycan.

Component of the acid-insoluble and acid-soluble organic matrix of calcified layers of the shell (at protein level).

The protein localises to the secreted. In Lottia gigantea (Giant owl limpet), this protein is SCP domain-containing protein 1.